We begin with the raw amino-acid sequence, 729 residues long: Fatty acid oxidation complex subunit alpha (729 aa).

The interval 1-189 is enoyl-CoA hydratase/isomerase; it reads MLYKGDTLYL…KIGLVDGVVK (189 aa). D296 contacts substrate. The 3-hydroxyacyl-CoA dehydrogenase stretch occupies residues 311-729; the sequence is ETPKQAAVLG…ARLVGDLKTA (419 aa). Residues M324, D343, 400–402, K407, and S429 contribute to the NAD(+) site; that span reads VVE. The For 3-hydroxyacyl-CoA dehydrogenase activity role is filled by H450. N453 is a binding site for NAD(+). Residues N500 and Y660 each coordinate substrate.

The protein in the N-terminal section; belongs to the enoyl-CoA hydratase/isomerase family. In the C-terminal section; belongs to the 3-hydroxyacyl-CoA dehydrogenase family. Heterotetramer of two alpha chains (FadB) and two beta chains (FadA).

It carries out the reaction a (3S)-3-hydroxyacyl-CoA + NAD(+) = a 3-oxoacyl-CoA + NADH + H(+). It catalyses the reaction a (3S)-3-hydroxyacyl-CoA = a (2E)-enoyl-CoA + H2O. The catalysed reaction is a 4-saturated-(3S)-3-hydroxyacyl-CoA = a (3E)-enoyl-CoA + H2O. The enzyme catalyses (3S)-3-hydroxybutanoyl-CoA = (3R)-3-hydroxybutanoyl-CoA. It carries out the reaction a (3Z)-enoyl-CoA = a 4-saturated (2E)-enoyl-CoA. It catalyses the reaction a (3E)-enoyl-CoA = a 4-saturated (2E)-enoyl-CoA. Its pathway is lipid metabolism; fatty acid beta-oxidation. Its function is as follows. Involved in the aerobic and anaerobic degradation of long-chain fatty acids via beta-oxidation cycle. Catalyzes the formation of 3-oxoacyl-CoA from enoyl-CoA via L-3-hydroxyacyl-CoA. It can also use D-3-hydroxyacyl-CoA and cis-3-enoyl-CoA as substrate. This is Fatty acid oxidation complex subunit alpha from Escherichia coli (strain SE11).